A 318-amino-acid polypeptide reads, in one-letter code: Aspartate carbamoyltransferase catalytic subunit (318 aa).

Residues R67 and T68 each contribute to the carbamoyl phosphate site. K95 is a binding site for L-aspartate. R117, H145, and Q148 together coordinate carbamoyl phosphate. L-aspartate is bound by residues R178 and R236. Carbamoyl phosphate-binding residues include G277 and P278.

Belongs to the aspartate/ornithine carbamoyltransferase superfamily. ATCase family. As to quaternary structure, heterododecamer (2C3:3R2) of six catalytic PyrB chains organized as two trimers (C3), and six regulatory PyrI chains organized as three dimers (R2).

It carries out the reaction carbamoyl phosphate + L-aspartate = N-carbamoyl-L-aspartate + phosphate + H(+). The protein operates within pyrimidine metabolism; UMP biosynthesis via de novo pathway; (S)-dihydroorotate from bicarbonate: step 2/3. Its function is as follows. Catalyzes the condensation of carbamoyl phosphate and aspartate to form carbamoyl aspartate and inorganic phosphate, the committed step in the de novo pyrimidine nucleotide biosynthesis pathway. The chain is Aspartate carbamoyltransferase catalytic subunit from Roseiflexus sp. (strain RS-1).